A 645-amino-acid chain; its full sequence is UvrABC system protein B (645 aa).

In terms of domain architecture, Helicase ATP-binding spans 24 to 414 (AGLNDNKRDQ…LFVEQVIRPT (391 aa)). Position 37–44 (37–44 (GVTGSGKT)) interacts with ATP. The Beta-hairpin signature appears at 90–113 (YYDYYQPEAYLPQTDTYIEKDSVI). In terms of domain architecture, Helicase C-terminal spans 426 to 591 (AEAQVYDVVH…VLPKTIIKPI (166 aa)). Residues 610–645 (KDTVSSLRKQMLAHAKNLEFEEAAKIKNIIGRINNL) enclose the UVR domain.

This sequence belongs to the UvrB family. Forms a heterotetramer with UvrA during the search for lesions. Interacts with UvrC in an incision complex.

It localises to the cytoplasm. The UvrABC repair system catalyzes the recognition and processing of DNA lesions. A damage recognition complex composed of 2 UvrA and 2 UvrB subunits scans DNA for abnormalities. Upon binding of the UvrA(2)B(2) complex to a putative damaged site, the DNA wraps around one UvrB monomer. DNA wrap is dependent on ATP binding by UvrB and probably causes local melting of the DNA helix, facilitating insertion of UvrB beta-hairpin between the DNA strands. Then UvrB probes one DNA strand for the presence of a lesion. If a lesion is found the UvrA subunits dissociate and the UvrB-DNA preincision complex is formed. This complex is subsequently bound by UvrC and the second UvrB is released. If no lesion is found, the DNA wraps around the other UvrB subunit that will check the other stand for damage. The sequence is that of UvrABC system protein B from Wolbachia sp. subsp. Brugia malayi (strain TRS).